The primary structure comprises 347 residues: Anthranilate phosphoribosyltransferase (347 aa).

5-phospho-alpha-D-ribose 1-diphosphate contacts are provided by residues glycine 86, 89–90 (GD), threonine 94, 96–99 (NIST), 114–122 (KHGNRSVSS), and serine 126. Residue glycine 86 participates in anthranilate binding. Residue serine 98 participates in Mg(2+) binding. Asparagine 117 contributes to the anthranilate binding site. Arginine 172 is a binding site for anthranilate. Mg(2+) is bound by residues aspartate 230 and glutamate 231.

Belongs to the anthranilate phosphoribosyltransferase family. Homodimer. Requires Mg(2+) as cofactor.

The enzyme catalyses N-(5-phospho-beta-D-ribosyl)anthranilate + diphosphate = 5-phospho-alpha-D-ribose 1-diphosphate + anthranilate. Its pathway is amino-acid biosynthesis; L-tryptophan biosynthesis; L-tryptophan from chorismate: step 2/5. Catalyzes the transfer of the phosphoribosyl group of 5-phosphorylribose-1-pyrophosphate (PRPP) to anthranilate to yield N-(5'-phosphoribosyl)-anthranilate (PRA). This chain is Anthranilate phosphoribosyltransferase, found in Shewanella frigidimarina (strain NCIMB 400).